The following is a 454-amino-acid chain: Tryptophanase (454 aa).

The residue at position 256 (Lys256) is an N6-(pyridoxal phosphate)lysine.

This sequence belongs to the beta-eliminating lyase family. As to quaternary structure, homotetramer. The cofactor is pyridoxal 5'-phosphate.

The catalysed reaction is L-tryptophan + H2O = indole + pyruvate + NH4(+). It functions in the pathway amino-acid degradation; L-tryptophan degradation via pyruvate pathway; indole and pyruvate from L-tryptophan: step 1/1. This chain is Tryptophanase (tnaA), found in Rhodobacter capsulatus (Rhodopseudomonas capsulata).